We begin with the raw amino-acid sequence, 404 residues long: Probable tRNA sulfurtransferase (404 aa).

Residues 60–165 (QPIVEALKLV…DEAAYISYEE (106 aa)) enclose the THUMP domain. ATP-binding positions include 183 to 184 (ML), 208 to 209 (HF), Arg-265, Gly-287, and Gln-296.

Belongs to the ThiI family.

It localises to the cytoplasm. It catalyses the reaction [ThiI sulfur-carrier protein]-S-sulfanyl-L-cysteine + a uridine in tRNA + 2 reduced [2Fe-2S]-[ferredoxin] + ATP + H(+) = [ThiI sulfur-carrier protein]-L-cysteine + a 4-thiouridine in tRNA + 2 oxidized [2Fe-2S]-[ferredoxin] + AMP + diphosphate. It carries out the reaction [ThiS sulfur-carrier protein]-C-terminal Gly-Gly-AMP + S-sulfanyl-L-cysteinyl-[cysteine desulfurase] + AH2 = [ThiS sulfur-carrier protein]-C-terminal-Gly-aminoethanethioate + L-cysteinyl-[cysteine desulfurase] + A + AMP + 2 H(+). It participates in cofactor biosynthesis; thiamine diphosphate biosynthesis. In terms of biological role, catalyzes the ATP-dependent transfer of a sulfur to tRNA to produce 4-thiouridine in position 8 of tRNAs, which functions as a near-UV photosensor. Also catalyzes the transfer of sulfur to the sulfur carrier protein ThiS, forming ThiS-thiocarboxylate. This is a step in the synthesis of thiazole, in the thiamine biosynthesis pathway. The sulfur is donated as persulfide by IscS. This is Probable tRNA sulfurtransferase from Streptococcus pyogenes serotype M2 (strain MGAS10270).